Here is a 1017-residue protein sequence, read N- to C-terminus: Dopamine dehydroxylase (1017 aa).

The tat-type signal signal peptide spans 1-34 (MGNLTMSRRTFVKTAAITGAAAAAFGASTHTALA). One can recognise a 4Fe-4S Mo/W bis-MGD-type domain in the interval 45–103 (DTVAVKTCCRGCGKMECGVKVIVQNGRAIRVEGDEGAFQSMGNCCTKSQSSIQAAYHPD). 4 residues coordinate [4Fe-4S] cluster: Cys-53, Cys-56, Cys-61, and Cys-89. Lys-91 functions as the Electron donor/acceptor in the catalytic mechanism.

Belongs to the prokaryotic molybdopterin-containing oxidoreductase family. It depends on [4Fe-4S] cluster as a cofactor. Mo-bis(molybdopterin guanine dinucleotide) is required as a cofactor. In terms of processing, predicted to be exported by the Tat system. The position of the signal peptide cleavage has not been experimentally proven.

It catalyses the reaction dopamine + AH2 = 3-tyramine + A + H2O. Involved in drug metabolism, as part of an interspecies gut bacterial pathway for Levodopa (L-dopa) metabolism, acting on dopamine produced by Enterecoccus L-dopa decarboxylase. Removes the para hydroxyl group of dopamine to produce m-tyramine (3-tyramine). It is possible that dopamine dehydroxylation influences the multiple side effects of L-dopa administration linked to dopamine production in the treatment of Parkinson's disease. The sequence is that of Dopamine dehydroxylase from Eggerthella lenta (Eubacterium lentum).